A 237-amino-acid polypeptide reads, in one-letter code: Uridylate kinase (237 aa).

ATP is bound at residue 12–15 (KLSG). Residues 20-25 (GENGFG) are involved in allosteric activation by GTP. Gly-54 serves as a coordination point for UMP. ATP contacts are provided by Gly-55 and Arg-59. Residues Asp-72 and 133-140 (TGNPYFST) each bind UMP. The ATP site is built by Tyr-166 and Asp-169.

The protein belongs to the UMP kinase family. In terms of assembly, homohexamer.

The protein resides in the cytoplasm. The enzyme catalyses UMP + ATP = UDP + ADP. The protein operates within pyrimidine metabolism; CTP biosynthesis via de novo pathway; UDP from UMP (UMPK route): step 1/1. With respect to regulation, allosterically activated by GTP. Inhibited by UTP. In terms of biological role, catalyzes the reversible phosphorylation of UMP to UDP. This is Uridylate kinase from Clostridium perfringens (strain ATCC 13124 / DSM 756 / JCM 1290 / NCIMB 6125 / NCTC 8237 / Type A).